The chain runs to 434 residues: Eukaryotic translation initiation factor 3 subunit E-1 (434 aa).

The region spanning 219–392 (FFNHPKGRDL…GHVVMGTQPL (174 aa)) is the PCI domain.

The protein belongs to the eIF-3 subunit E family. Component of the eukaryotic translation initiation factor 3 (eIF-3) complex. The eIF-3 complex interacts with pix. Interacts with mxt.

The protein resides in the cytoplasm. Component of the eukaryotic translation initiation factor 3 (eIF-3) complex, which is involved in protein synthesis of a specialized repertoire of mRNAs and, together with other initiation factors, stimulates binding of mRNA and methionyl-tRNAi to the 40S ribosome. The eIF-3 complex specifically targets and initiates translation of a subset of mRNAs involved in cell proliferation. The sequence is that of Eukaryotic translation initiation factor 3 subunit E-1 (eIF3-S6-1) from Drosophila willistoni (Fruit fly).